We begin with the raw amino-acid sequence, 476 residues long: Protein transport protein Sec61 subunit alpha isoform 2 (476 aa).

Topologically, residues 1 to 32 (MGIKFLEVIKPFCAVLPEIQKPERKIQFREKV) are cytoplasmic. Residues 33 to 53 (LWTAITLFIFLVCCQIPLFGI) form a helical membrane-spanning segment. Topologically, residues 54 to 75 (MSSDSADPFYWMRVILASNRGT) are lumenal. A helical membrane pass occupies residues 76-96 (LMELGISPIVTSGLIMQLLAG). Topologically, residues 97–117 (AKIIEVGDTPKDRALFNGAQK) are cytoplasmic. The chain crosses the membrane as a helical span at residues 118–138 (LFGMIITIGQAIVYVMTGMYG). At 139 to 144 (DPAEMG) the chain is on the lumenal side. Residues 145-165 (AGICLLIIIQLFVAGLIVLLL) traverse the membrane as a helical segment. At 166–172 (DELLQKG) the chain is on the cytoplasmic side. The chain crosses the membrane as a helical span at residues 173–193 (YGLGSGISLFIATNICETIVW). At 194–240 (KASSPTTINTGRGTEFEGAVIALFHLLATRTDKVRALREAFYRQNLP) the chain is on the lumenal side. The helical transmembrane segment at 241–261 (NLMNLIATVFVFAVVIYFQGF) threads the bilayer. The Cytoplasmic portion of the chain corresponds to 262-288 (RVDLPIKSARYRGQYSSYPIKLFYTSN). The chain crosses the membrane as a helical span at residues 289–309 (IPIILQSALVSNLYVISQMLS). At 310–353 (VRFSGNFLVNLLGQWADVSGGGPARSYPVGGLCYYLSPPESMGA) the chain is on the lumenal side. The chain crosses the membrane as a helical span at residues 354 to 374 (ILEDPVHVVVYIIFMLGSCAF). Over 375–420 (FSKTWIEVSGSSAKDVAKQLKEQQMVMRGHRDTSMVHELNRYIPTA) the chain is Cytoplasmic. A run of 2 helical transmembrane segments spans residues 421–441 (AAFGGLCIGALSVLADFLGAI) and 442–462 (GSGTGILLAVTIIYQYFEIFV). Residues 463–476 (KEQAEVGGMGALFF) lie on the Cytoplasmic side of the membrane.

This sequence belongs to the SecY/SEC61-alpha family. As to quaternary structure, the SEC61 channel-forming translocon complex consists of channel-forming core components SEC61A1, SEC61B and SEC61G and different auxiliary components such as SEC62 and SEC63.

Its subcellular location is the endoplasmic reticulum membrane. Component of SEC61 channel-forming translocon complex that mediates transport of signal peptide-containing precursor polypeptides across the endoplasmic reticulum (ER). Forms a ribosome receptor and a gated pore in the ER membrane, both functions required for cotranslational translocation of nascent polypeptides. The protein is Protein transport protein Sec61 subunit alpha isoform 2 (SEC61A2) of Pongo abelii (Sumatran orangutan).